Here is a 451-residue protein sequence, read N- to C-terminus: Ubiquitin hydrolase B (451 aa).

One can recognise a USP domain in the interval 19 to 450 (RGLINTSNTC…EAYLLLYQLV (432 aa)). A compositionally biased stretch (low complexity) spans 83–115 (NNSNSTTTTSSSSTTATTTSTSNNNKSQTPTSP). The disordered stretch occupies residues 83–154 (NNSNSTTTTS…PPINPKHFND (72 aa)). Residues 116–135 (IQQHHQSQTNGLSNQPSVAT) show a composition bias toward polar residues. The Nucleophile role is filled by His-399. Residue His-408 is the Proton acceptor of the active site.

It belongs to the peptidase C19 family. As to quaternary structure, interacts with mkkA (via F-box/WD40 domains).

The catalysed reaction is Thiol-dependent hydrolysis of ester, thioester, amide, peptide and isopeptide bonds formed by the C-terminal Gly of ubiquitin (a 76-residue protein attached to proteins as an intracellular targeting signal).. Its function is as follows. Required for proper prespore cell patterning. Plays a role in stabilizing mkkA by preventing it from being targeted for degradation. ubcB and ubpB differentially control ubiquitination/deubiquitination and degradation of mkkA in a cell-type-specific and temporally regulated manner. In Dictyostelium discoideum (Social amoeba), this protein is Ubiquitin hydrolase B (ubpB).